A 323-amino-acid polypeptide reads, in one-letter code: MQDTFQRQINYLRIAITDRCNLRCRYCMPATGVPLKGHEDILRLEEIATLARVAAGTGISRIRLTGGEPLVRKNVVTLVRELAAIPGLEEISLTTNGIFLGALAFSLKEAGLKRVNISLDTLKKDRYRYITRRGNITSVWQGIRAALAAGLTPVKLNVVITRGFNDDEILDFARLAREEPLHIRFIELMPIGTAAASGTAYVPAEEIKGRISRVYPLEPFPDLATNGPAANFRLVGGRGSVGFITPMSNHFCSRCNRLRLTADGKLRPCLYWDGEIDIKGPLRAGAPETELAAIFARAVSLKPAEHHMENGWRQPRAMSQIGG.

Positions 4 to 226 (TFQRQINYLR…LEPFPDLATN (223 aa)) constitute a Radical SAM core domain. R13 contacts GTP. [4Fe-4S] cluster is bound by residues C20 and C24. An S-adenosyl-L-methionine-binding site is contributed by Y26. C27 is a binding site for [4Fe-4S] cluster. Residue R63 participates in GTP binding. S-adenosyl-L-methionine is bound at residue G67. T94 is a binding site for GTP. S118 contacts S-adenosyl-L-methionine. K155 contacts GTP. M189 contacts S-adenosyl-L-methionine. [4Fe-4S] cluster-binding residues include C252 and C255. 257–259 (RLR) is a binding site for GTP. A [4Fe-4S] cluster-binding site is contributed by C269.

It belongs to the radical SAM superfamily. MoaA family. As to quaternary structure, monomer and homodimer. The cofactor is [4Fe-4S] cluster.

The enzyme catalyses GTP + AH2 + S-adenosyl-L-methionine = (8S)-3',8-cyclo-7,8-dihydroguanosine 5'-triphosphate + 5'-deoxyadenosine + L-methionine + A + H(+). It functions in the pathway cofactor biosynthesis; molybdopterin biosynthesis. Its function is as follows. Catalyzes the cyclization of GTP to (8S)-3',8-cyclo-7,8-dihydroguanosine 5'-triphosphate. This chain is GTP 3',8-cyclase, found in Moorella thermoacetica (strain ATCC 39073 / JCM 9320).